A 333-amino-acid chain; its full sequence is MTMTVEKRIEADVTVSHEGVERAYVTFLAGNKDYWMLVVGLAKGLRKVKSAYPLVVATLPDVPEEHRQILVDQGCIIRDIEPVYPPENTTGYSMAYYVINYSKLRIWEFVEYEKMIYLDGDIQVFKNIDHLFDTPRGYLYAVKDCFCEVSWSKTPQYKIGYCQQSPEKVTWPVESLGAPPPVYFNAGMLVFGPNLVTYEDLLRVVQITTPTYFAEQDFLNIYFRDIYKPIPSTYNLVMAMLWRHPEHIDLDQISVVHYCANGSKPWKFDEAEEHMDREDIKMLVKKWWEIYEDSSLDYKNFVETESKLNPVTATLASKKLVGDVLTSLAPSAA.

The active site involves K103. Residues D119, D121, and H257 each contribute to the Mn(2+) site.

The protein belongs to the glycosyltransferase 8 family. Galactosyltransferase subfamily. A divalent metal cation is required as a cofactor.

It is found in the cytoplasm. It catalyses the reaction myo-inositol + UDP-alpha-D-galactose = alpha-D-galactosyl-(1-&gt;3)-1D-myo-inositol + UDP + H(+). In terms of biological role, galactinol synthase involved in the biosynthesis of raffinose family oligosaccharides (RFOs) that function as osmoprotectants. May promote plant stress tolerance. This is Galactinol synthase 5 (GOLS5) from Arabidopsis thaliana (Mouse-ear cress).